Consider the following 215-residue polypeptide: Holliday junction branch migration complex subunit RuvA (215 aa).

The tract at residues 1 to 67 (MIGWLQGERI…DDGSTLFGFC (67 aa)) is domain I. The tract at residues 68–146 (DQQERDLFRT…NWAPLQEPSL (79 aa)) is domain II. The segment at 147 to 158 (SLVDRSDVKAIP) is flexible linker. The segment at 159–215 (LGEPCLRDLQITLETLGYEDLEIRRAMRAVASGPDVPAEDDGDAWLRASLKWLSQSA) is domain III.

It belongs to the RuvA family. Homotetramer. Forms an RuvA(8)-RuvB(12)-Holliday junction (HJ) complex. HJ DNA is sandwiched between 2 RuvA tetramers; dsDNA enters through RuvA and exits via RuvB. An RuvB hexamer assembles on each DNA strand where it exits the tetramer. Each RuvB hexamer is contacted by two RuvA subunits (via domain III) on 2 adjacent RuvB subunits; this complex drives branch migration. In the full resolvosome a probable DNA-RuvA(4)-RuvB(12)-RuvC(2) complex forms which resolves the HJ.

The protein resides in the cytoplasm. Its function is as follows. The RuvA-RuvB-RuvC complex processes Holliday junction (HJ) DNA during genetic recombination and DNA repair, while the RuvA-RuvB complex plays an important role in the rescue of blocked DNA replication forks via replication fork reversal (RFR). RuvA specifically binds to HJ cruciform DNA, conferring on it an open structure. The RuvB hexamer acts as an ATP-dependent pump, pulling dsDNA into and through the RuvAB complex. HJ branch migration allows RuvC to scan DNA until it finds its consensus sequence, where it cleaves and resolves the cruciform DNA. This chain is Holliday junction branch migration complex subunit RuvA, found in Synechococcus sp. (strain WH7803).